The following is a 643-amino-acid chain: Threonine--tRNA ligase (643 aa).

The 61-residue stretch at 1-61 (MPIITLPDGS…EQDATLEIIT (61 aa)) folds into the TGS domain. Residues 243–534 (DHRKIGKALD…ITEEYAGFFP (292 aa)) are catalytic. Residues cysteine 334, histidine 385, and histidine 511 each contribute to the Zn(2+) site.

The protein belongs to the class-II aminoacyl-tRNA synthetase family. Homodimer. Requires Zn(2+) as cofactor.

The protein resides in the cytoplasm. It carries out the reaction tRNA(Thr) + L-threonine + ATP = L-threonyl-tRNA(Thr) + AMP + diphosphate + H(+). Its function is as follows. Catalyzes the attachment of threonine to tRNA(Thr) in a two-step reaction: L-threonine is first activated by ATP to form Thr-AMP and then transferred to the acceptor end of tRNA(Thr). Also edits incorrectly charged L-seryl-tRNA(Thr). The sequence is that of Threonine--tRNA ligase from Haemophilus influenzae (strain ATCC 51907 / DSM 11121 / KW20 / Rd).